Reading from the N-terminus, the 517-residue chain is Tyrosine-protein kinase Fgr (517 aa).

Gly-2 is lipidated: N-myristoyl glycine. 2 S-palmitoyl cysteine lipidation sites follow: Cys-3 and Cys-6. Ser-13 is subject to Phosphoserine. Tyr-32 carries the post-translational modification Phosphotyrosine. Ser-50 carries the phosphoserine modification. An SH3 domain is found at 65-126; that stretch reads TGVTIFVALY…PSNYVAPVDS (62 aa). The interaction with CLNK stretch occupies residues 102-103; the sequence is WW. In terms of domain architecture, SH2 spans 132–229; the sequence is WYFGKISRKD…GLCYLLTAPC (98 aa). Tyr-196 bears the Phosphotyrosine mark. At Ser-206 the chain carries Phosphoserine. Residues 251 to 504 form the Protein kinase domain; sequence IALERRLGTG…YLQSFLEDYF (254 aa). ATP is bound by residues 257–265 and Lys-279; that span reads LGTGCFGDV. Residue Asp-370 is the Proton acceptor of the active site. Tyr-400 carries the post-translational modification Phosphotyrosine. At Tyr-511 the chain carries Phosphotyrosine; by SRC.

Belongs to the protein kinase superfamily. Tyr protein kinase family. SRC subfamily. In terms of assembly, interacts with ITGB1, ITGB2, MS4A2/FCER1B, FCER1G and FCGR2. Interacts (via SH2 domain) with SYK (tyrosine phosphorylated). Interacts (via SH2 domain) with FLT3 (tyrosine phosphorylated). Interacts with PTK2/FAK1. Interacts (via SH2 domain) with HCLS1 (tyrosine phosphorylated by SYK). Interacts with SIRPA and PTPNS1. Interacts (not phosphorylated on tyrosine residues) with CBL; FGR tyrosine phosphorylation promotes dissociation. Interacts with CLNK. Ubiquitinated. Becomes ubiquitinated in response to ITGB2 signaling; this does not lead to degradation. Post-translationally, phosphorylated. Autophosphorylated on tyrosine residues. Becomes phosphorylated in response to FCGR2 engagement, cell adhesion and signaling by ITGB2. Prior phosphorylation at Tyr-511 by SRC inhibits ulterior autophosphorylation at Tyr-400. Expressed in natural killer cells (at protein level).

The protein resides in the cell membrane. The protein localises to the cell projection. It is found in the ruffle membrane. Its subcellular location is the cytoplasm. It localises to the cytosol. The protein resides in the cytoskeleton. The protein localises to the mitochondrion inner membrane. It is found in the mitochondrion intermembrane space. It carries out the reaction L-tyrosyl-[protein] + ATP = O-phospho-L-tyrosyl-[protein] + ADP + H(+). Activated by autophosphorylation. Prior phosphorylation at Tyr-511 by SRC inhibits ulterior autophosphorylation at Tyr-400. Activated by phorbol myristate acetate, phosphatidic acid and poly-Lys. Binding (via SH2 domain) of HCLS1 that is already phosphorylated by SYK strongly increases kinase activity. Its function is as follows. Non-receptor tyrosine-protein kinase that transmits signals from cell surface receptors devoid of kinase activity and contributes to the regulation of immune responses, including neutrophil, monocyte, macrophage and mast cell functions, cytoskeleton remodeling in response to extracellular stimuli, phagocytosis, cell adhesion and migration. Promotes mast cell degranulation, release of inflammatory cytokines and IgE-mediated anaphylaxis. Acts downstream of receptors that bind the Fc region of immunoglobulins, such as MS4A2/FCER1B, FCER1G and FCGR2. Acts downstream of ITGB1 and ITGB2, and regulates actin cytoskeleton reorganization, cell spreading and adhesion. Depending on the context, activates or inhibits cellular responses. Functions as a negative regulator of ITGB2 signaling, phagocytosis and SYK activity in monocytes. Required for normal ITGB1 and ITGB2 signaling, normal cell spreading and adhesion in neutrophils and macrophages. Functions as a positive regulator of cell migration and regulates cytoskeleton reorganization via RAC1 activation. Phosphorylates SYK (in vitro) and promotes SYK-dependent activation of AKT1 and MAP kinase signaling. Phosphorylates PLD2 in antigen-stimulated mast cells, leading to PLD2 activation and the production of the signaling molecules lysophosphatidic acid and diacylglycerol. Promotes activation of PIK3R1. Phosphorylates FASLG, and thereby regulates its ubiquitination and subsequent internalization. Phosphorylates ABL1. Promotes phosphorylation of CBL, CTTN, PIK3R1, PTK2/FAK1, PTK2B/PYK2 and VAV2. Phosphorylates HCLS1 that has already been phosphorylated by SYK, but not unphosphorylated HCLS1. Together with CLNK, it acts as a negative regulator of natural killer cell-activating receptors and inhibits interferon-gamma production. The sequence is that of Tyrosine-protein kinase Fgr (Fgr) from Mus musculus (Mouse).